The chain runs to 934 residues: 2-oxoglutarate dehydrogenase E1 component (934 aa).

Residues 515–537 (RAAQDKIDKSDKMDNPDMERPES) show a composition bias toward basic and acidic residues. Residues 515-544 (RAAQDKIDKSDKMDNPDMERPESLQEPLQS) form a disordered region.

It belongs to the alpha-ketoglutarate dehydrogenase family. In terms of assembly, homodimer. Part of the 2-oxoglutarate dehydrogenase (OGDH) complex composed of E1 (2-oxoglutarate dehydrogenase), E2 (dihydrolipoamide succinyltransferase) and E3 (dihydrolipoamide dehydrogenase); the complex contains multiple copies of the three enzymatic components (E1, E2 and E3). Thiamine diphosphate is required as a cofactor.

The enzyme catalyses N(6)-[(R)-lipoyl]-L-lysyl-[protein] + 2-oxoglutarate + H(+) = N(6)-[(R)-S(8)-succinyldihydrolipoyl]-L-lysyl-[protein] + CO2. Its function is as follows. E1 component of the 2-oxoglutarate dehydrogenase (OGDH) complex which catalyzes the decarboxylation of 2-oxoglutarate, the first step in the conversion of 2-oxoglutarate to succinyl-CoA and CO(2). The sequence is that of 2-oxoglutarate dehydrogenase E1 component from Staphylococcus haemolyticus (strain JCSC1435).